Here is a 154-residue protein sequence, read N- to C-terminus: Low molecular weight protein-tyrosine-phosphatase PtpA (154 aa).

C8 acts as the Nucleophile in catalysis. R14 is an active-site residue. D120 functions as the Proton donor in the catalytic mechanism.

The protein belongs to the low molecular weight phosphotyrosine protein phosphatase family.

It carries out the reaction O-phospho-L-tyrosyl-[protein] + H2O = L-tyrosyl-[protein] + phosphate. In terms of biological role, dephosphorylates the phosphotyrosine-containing proteins. This chain is Low molecular weight protein-tyrosine-phosphatase PtpA (ptpA), found in Staphylococcus saprophyticus subsp. saprophyticus (strain ATCC 15305 / DSM 20229 / NCIMB 8711 / NCTC 7292 / S-41).